We begin with the raw amino-acid sequence, 505 residues long: MITLTGHTLTIEEMKRLLLEGEGVTACPTSMQKVAECREVVEKIVENGKVVYGITTGFGKFSDVLIQKDDVKALQHNLIQSHACGIGDPFPEEVSRGMLILRANTMLKGVSGVRPLVVNMLLEFVNRKIHPVVPQQGSLGASGDLAPLSHLALILLGEGEVFYKGKRVHAMVALTEEGLEPIELEAKEGLALINGTQAMTAQGVLSYIEAEATAYQAELIASMTIEGLQGIIDAFDENVHKARGYKEQVEVASRIRDILHDSKLTTKQGELRVQDAYSLRCIPQVHGASWQVLNYVKEKLEIEMNAATDNPLIFDGGEKVISGGNFHGQPIAFAMDFLKVGMAELANISERRIERLVNPQLNDLPPFLSPEPGLQSGAMIMQYAAASLVSENKTLAHPASVDSIPSSANQEDHVSMGTIASRHAHQIIQNVRRVLSIEMICAMQAAEYRGIENMSTVTKSFYHQGRQQVPSITNDRIFSTDIENITHWLKTNYSIKERLDVNAAL.

A cross-link (5-imidazolinone (Ala-Gly)) is located at residues 141–143 (ASG). The residue at position 142 (Ser142) is a 2,3-didehydroalanine (Ser).

This sequence belongs to the PAL/histidase family. In terms of processing, contains an active site 4-methylidene-imidazol-5-one (MIO), which is formed autocatalytically by cyclization and dehydration of residues Ala-Ser-Gly.

It localises to the cytoplasm. It catalyses the reaction L-histidine = trans-urocanate + NH4(+). Its pathway is amino-acid degradation; L-histidine degradation into L-glutamate; N-formimidoyl-L-glutamate from L-histidine: step 1/3. The chain is Histidine ammonia-lyase from Bacillus anthracis.